The sequence spans 191 residues: Large ribosomal subunit protein bL9 (191 aa).

Residues 171 to 191 (EDALKPEDFFNPEAELESEEE) form a disordered region.

It belongs to the bacterial ribosomal protein bL9 family.

Its function is as follows. Binds to the 23S rRNA. This is Large ribosomal subunit protein bL9 from Rhizobium meliloti (strain 1021) (Ensifer meliloti).